The following is a 204-amino-acid chain: CDP-archaeol synthase (204 aa).

6 consecutive transmembrane segments (helical) span residues 5-25 (VYACFLGLYFLVFSLIVYVIL), 43-63 (MLWVLPAYVANASPVVFSRLV), 91-111 (FEGFLGGMLSGVLVGILLAYA), 116-136 (GVSAFLLPLGALLGDLGGAFV), 147-167 (PAILLDQLDFVAGALILQGLF), and 175-195 (VVVAVVLLTPIVHLLTNMAAF).

It belongs to the CDP-archaeol synthase family. Mg(2+) is required as a cofactor.

The protein resides in the cell membrane. The catalysed reaction is 2,3-bis-O-(geranylgeranyl)-sn-glycerol 1-phosphate + CTP + H(+) = CDP-2,3-bis-O-(geranylgeranyl)-sn-glycerol + diphosphate. Its pathway is membrane lipid metabolism; glycerophospholipid metabolism. Its function is as follows. Catalyzes the formation of CDP-2,3-bis-(O-geranylgeranyl)-sn-glycerol (CDP-archaeol) from 2,3-bis-(O-geranylgeranyl)-sn-glycerol 1-phosphate (DGGGP) and CTP. This reaction is the third ether-bond-formation step in the biosynthesis of archaeal membrane lipids. The chain is CDP-archaeol synthase from Thermofilum pendens (strain DSM 2475 / Hrk 5).